The chain runs to 426 residues: Glucose-6-phosphate isomerase (426 aa).

Glu282 acts as the Proton donor in catalysis. Catalysis depends on residues His303 and Lys419.

Belongs to the GPI family.

The protein resides in the cytoplasm. The enzyme catalyses alpha-D-glucose 6-phosphate = beta-D-fructose 6-phosphate. Its pathway is carbohydrate biosynthesis; gluconeogenesis. The protein operates within carbohydrate degradation; glycolysis; D-glyceraldehyde 3-phosphate and glycerone phosphate from D-glucose: step 2/4. In terms of biological role, catalyzes the reversible isomerization of glucose-6-phosphate to fructose-6-phosphate. This chain is Glucose-6-phosphate isomerase, found in Mycoplasmoides gallisepticum (strain R(low / passage 15 / clone 2)) (Mycoplasma gallisepticum).